Here is a 306-residue protein sequence, read N- to C-terminus: Latrophilin receptor-like protein A (306 aa).

Residues 1–15 (MPSQLLNTVLSYLTD) lie on the Extracellular side of the membrane. A helical membrane pass occupies residues 16–36 (ILLSLSIVGSFLTIFTFMLYP). At 37-41 (KLRSY) the chain is on the cytoplasmic side. Residues 42–62 (PIKLIIYLCMSIVFSLFFFEI) traverse the membrane as a helical segment. The Extracellular segment spans residues 63–70 (SFRSSNSL). A helical transmembrane segment spans residues 71–91 (FCIPAAILVHYFFLANFFWTF). Residues 92–113 (SVSFNFFQMIVKRNRDSEFYER) are Cytoplasmic-facing. A helical transmembrane segment spans residues 114–134 (YYHLISWGIPFIIIIFCAAFK). Residues 135 to 152 (KYVDRGGFCYLEDQYSVY) lie on the Extracellular side of the membrane. A helical transmembrane segment spans residues 153–173 (FGFFMPGVIIVCSNICIYVFV). At 174 to 196 (AKEIYKTLRHTPTQKRQTVKEFR) the chain is on the cytoplasmic side. The helical transmembrane segment at 197–217 (VYFSIFVSIGSSWIFGFIYMF) threads the bilayer. Over 218–222 (SDSNS) the chain is Extracellular. The chain crosses the membrane as a helical span at residues 223 to 243 (IIGYIFLILFSISTSLQGFFI). Residues 244 to 306 (FISYCLNYKV…TTTTTNVYSA (63 aa)) are Cytoplasmic-facing. The tract at residues 279-306 (TTQSGPTGTTDSSSTMTSTTTTTNVYSA) is disordered.

The protein belongs to the G-protein coupled receptor 2 family. LN-TM7 subfamily.

The protein localises to the membrane. In Dictyostelium discoideum (Social amoeba), this protein is Latrophilin receptor-like protein A (lrlA).